Reading from the N-terminus, the 200-residue chain is MGKTIGLTGSVATGKSTVSSMIQQAGIPLVDADIAARKVVEPGTEGLKEIVAYFGEEILLADGTLNRAKLGKIIFKDKEKREKLNEITHPRVKEYMLEARERFFRAGEELVFFDIPLLFESHLESLVDQIIVVWTTPETELKRLMERNNLTKEEALARINSQIGIDEKAKKADFVINNNESLEKTQKQVYTFIERFVKNK.

One can recognise a DPCK domain in the interval 4–200; that stretch reads TIGLTGSVAT…TFIERFVKNK (197 aa). Residue 12 to 17 participates in ATP binding; sequence ATGKST.

This sequence belongs to the CoaE family.

The protein resides in the cytoplasm. It carries out the reaction 3'-dephospho-CoA + ATP = ADP + CoA + H(+). Its pathway is cofactor biosynthesis; coenzyme A biosynthesis; CoA from (R)-pantothenate: step 5/5. In terms of biological role, catalyzes the phosphorylation of the 3'-hydroxyl group of dephosphocoenzyme A to form coenzyme A. The polypeptide is Dephospho-CoA kinase (Listeria monocytogenes serovar 1/2a (strain ATCC BAA-679 / EGD-e)).